A 437-amino-acid polypeptide reads, in one-letter code: GTPase Der (437 aa).

EngA-type G domains are found at residues 4 to 168 and 177 to 352; these read PVVA…PAED and IRVS…QAHS. GTP-binding positions include 10 to 17, 57 to 61, 120 to 123, 183 to 190, 230 to 234, and 295 to 298; these read GRPNVGKS, DTGGI, NKAD, DTAGM, and NKWD. The region spanning 353–437 is the KH-like domain; the sequence is MRIPTAVLND…PVRIWTRKKT (85 aa).

Belongs to the TRAFAC class TrmE-Era-EngA-EngB-Septin-like GTPase superfamily. EngA (Der) GTPase family. In terms of assembly, associates with the 50S ribosomal subunit.

GTPase that plays an essential role in the late steps of ribosome biogenesis. In Brevibacillus brevis (strain 47 / JCM 6285 / NBRC 100599), this protein is GTPase Der.